A 476-amino-acid chain; its full sequence is Zinc metalloproteinase/disintegrin (476 aa).

Residues Met1 to Ser20 form the signal peptide. The propeptide occupies Ile21–Gln184. Gln185 bears the Pyrrolidone carboxylic acid mark. In terms of domain architecture, Peptidase M12B spans Arg191–Pro387. Residues Glu194 and Asp278 each coordinate Ca(2+). 3 cysteine pairs are disulfide-bonded: Cys302–Cys382, Cys342–Cys366, and Cys344–Cys349. His327 contacts Zn(2+). Glu328 is a catalytic residue. Zn(2+) contacts are provided by His331 and His337. 2 residues coordinate Ca(2+): Cys382 and Asn385. A propeptide spanning residues Leu388–Leu403 is cleaved from the precursor. The region spanning Thr395–Gly476 is the Disintegrin domain. 6 disulfide bridges follow: Cys409-Cys424, Cys411-Cys419, Cys418-Cys441, Cys432-Cys438, Cys437-Cys462, and Cys450-Cys469. The Cell attachment site signature appears at Lys454–Asp456.

It belongs to the venom metalloproteinase (M12B) family. P-II subfamily. P-IId sub-subfamily. As to quaternary structure, homodimer; disulfide-linked (disintegrin). It depends on Zn(2+) as a cofactor. Expressed by the venom gland.

The protein localises to the secreted. The metalloproteinase is inhibited by EDTA, o-phenanthroline, and cysteine. Glutathione does not inhibit the enzymatic activity. Functionally, shows weak degradation of alpha-fibrinogen, but has no activity on beta- and gamma-chains. Digests luteinizing hormone-releasing hormone (LH-RH) and oxidized insulin at X-Leu, X-Phe, and X-Val bonds as well as X-His bond. Does not show fibrinogen-clotting activity. Does not show hemorrhagic activity. In terms of biological role, inhibits ADP-induced platelet aggregation. In Gloydius brevicauda (Korean slamosa snake), this protein is Zinc metalloproteinase/disintegrin.